A 510-amino-acid polypeptide reads, in one-letter code: Secreted RxLR effector protein 108 (510 aa).

An N-terminal signal peptide occupies residues 1 to 20 (MRGAYYVLTALFVVTSSDIA). The N-linked (GlcNAc...) asparagine glycan is linked to Asn-47. Positions 48–65 (RSLRGSRDGRNDLANEER) match the RxLR-dEER motif. Disordered stretches follow at residues 111–139 (RAAKAVEEKSRPAKAAKKTPRAAKAAKKT) and 386–442 (KRSR…DDPK). Basic residues predominate over residues 122–137 (PAKAAKKTPRAAKAAK). Over residues 393-405 (DGNTDTASLPSKQ) the composition is skewed to polar residues. The segment covering 429-442 (VPTKEIKSSFDDPK) has biased composition (basic and acidic residues).

It belongs to the RxLR effector family.

Its subcellular location is the secreted. It is found in the host nucleus. Secreted effector that completely suppresses the host cell death induced by cell death-inducing proteins. The polypeptide is Secreted RxLR effector protein 108 (Plasmopara viticola (Downy mildew of grapevine)).